Reading from the N-terminus, the 260-residue chain is DNA repair protein RecO (260 aa).

This sequence belongs to the RecO family.

Its function is as follows. Involved in DNA repair and RecF pathway recombination. This is DNA repair protein RecO from Paracidovorax citrulli (strain AAC00-1) (Acidovorax citrulli).